We begin with the raw amino-acid sequence, 220 residues long: Translation initiation factor IF-3 (220 aa).

The interval 182 to 220 is disordered; that stretch reads TPLVKKDDKEEPATRAVRTITAPPRPTSARLASKPAGNG. Basic and acidic residues predominate over residues 185–194; sequence VKKDDKEEPA.

It belongs to the IF-3 family. Monomer.

The protein resides in the cytoplasm. Functionally, IF-3 binds to the 30S ribosomal subunit and shifts the equilibrium between 70S ribosomes and their 50S and 30S subunits in favor of the free subunits, thus enhancing the availability of 30S subunits on which protein synthesis initiation begins. This chain is Translation initiation factor IF-3, found in Synechococcus sp. (strain WH7803).